The following is a 269-amino-acid chain: 2-dehydro-3-deoxyphosphooctonate aldolase (269 aa).

It belongs to the KdsA family.

It localises to the cytoplasm. The enzyme catalyses D-arabinose 5-phosphate + phosphoenolpyruvate + H2O = 3-deoxy-alpha-D-manno-2-octulosonate-8-phosphate + phosphate. Its pathway is carbohydrate biosynthesis; 3-deoxy-D-manno-octulosonate biosynthesis; 3-deoxy-D-manno-octulosonate from D-ribulose 5-phosphate: step 2/3. The protein operates within bacterial outer membrane biogenesis; lipopolysaccharide biosynthesis. The protein is 2-dehydro-3-deoxyphosphooctonate aldolase of Chlamydia trachomatis serovar A (strain ATCC VR-571B / DSM 19440 / HAR-13).